A 169-amino-acid polypeptide reads, in one-letter code: Large ribosomal subunit protein uL10 (169 aa).

Belongs to the universal ribosomal protein uL10 family. In terms of assembly, part of the 50S ribosomal subunit.

This Deinococcus radiodurans (strain ATCC 13939 / DSM 20539 / JCM 16871 / CCUG 27074 / LMG 4051 / NBRC 15346 / NCIMB 9279 / VKM B-1422 / R1) protein is Large ribosomal subunit protein uL10 (rplJ).